We begin with the raw amino-acid sequence, 312 residues long: Cobalamin biosynthesis protein CobD (312 aa).

Helical transmembrane passes span 61-81 (IALL…LPLL), 83-103 (IIVP…AQHA), 152-172 (DAVF…AVLY), and 292-312 (GMWL…AIHA).

The protein belongs to the CobD/CbiB family.

The protein localises to the cell membrane. It participates in cofactor biosynthesis; adenosylcobalamin biosynthesis. Its function is as follows. Converts cobyric acid to cobinamide by the addition of aminopropanol on the F carboxylic group. This Chromobacterium violaceum (strain ATCC 12472 / DSM 30191 / JCM 1249 / CCUG 213 / NBRC 12614 / NCIMB 9131 / NCTC 9757 / MK) protein is Cobalamin biosynthesis protein CobD.